We begin with the raw amino-acid sequence, 236 residues long: Large ribosomal subunit protein uL1 (236 aa).

The protein belongs to the universal ribosomal protein uL1 family. In terms of assembly, part of the 50S ribosomal subunit.

Functionally, binds directly to 23S rRNA. The L1 stalk is quite mobile in the ribosome, and is involved in E site tRNA release. In terms of biological role, protein L1 is also a translational repressor protein, it controls the translation of the L11 operon by binding to its mRNA. In Acidobacterium capsulatum (strain ATCC 51196 / DSM 11244 / BCRC 80197 / JCM 7670 / NBRC 15755 / NCIMB 13165 / 161), this protein is Large ribosomal subunit protein uL1.